The following is a 459-amino-acid chain: Proton-coupled folate transporter (459 aa).

Methionine 1 carries the N-acetylmethionine modification. Residues methionine 1–valine 25 are Cytoplasmic-facing. Serine 6 carries the phosphoserine modification. Residues glutamate 26–threonine 44 form a helical membrane-spanning segment. Residues glutamine 45–threonine 82 lie on the Extracellular side of the membrane. Residues asparagine 58 and asparagine 68 are each glycosylated (N-linked (GlcNAc...) asparagine). An intrachain disulfide couples cysteine 66 to cysteine 298. The chain crosses the membrane as a helical span at residues serine 83 to serine 108. Over aspartate 109–glycine 112 the chain is Cytoplasmic. The chain crosses the membrane as a helical span at residues arginine 113–valine 135. The Extracellular portion of the chain corresponds to glutamine 136–histidine 140. The chain crosses the membrane as a helical span at residues isoleucine 141 to leucine 154. The Cytoplasmic portion of the chain corresponds to glycine 155 to arginine 177. Positions 156 and 185 each coordinate H(+). The chain crosses the membrane as a helical span at residues threonine 178–leucine 203. The Extracellular segment spans residues arginine 204 to tyrosine 208. A helical transmembrane segment spans residues alanine 209 to alanine 227. The Cytoplasmic portion of the chain corresponds to phenylalanine 228–histidine 266. Residues leucine 267–threonine 289 form a helical membrane-spanning segment. Histidine 281 serves as a coordination point for H(+). Topologically, residues leucine 290 to lysine 302 are extracellular. Residues leucine 303–leucine 325 form a helical membrane-spanning segment. The Cytoplasmic portion of the chain corresponds to glutamine 326 to aspartate 331. A helical membrane pass occupies residues threonine 332 to phenylalanine 351. Residues alanine 352–threonine 355 lie on the Extracellular side of the membrane. The chain crosses the membrane as a helical span at residues proline 356–arginine 376. Residues alanine 377–glutamine 388 lie on the Cytoplasmic side of the membrane. The chain crosses the membrane as a helical span at residues glycine 389–tyrosine 414. The Extracellular segment spans residues proline 415 to lysine 422. The chain crosses the membrane as a helical span at residues glycine 423–glycine 441. Residues valine 442–serine 459 lie on the Cytoplasmic side of the membrane.

It belongs to the major facilitator superfamily. SLC46A family. Monomer. Expressed almost exclusively in the small intestine: expressed at high level in the upper half of the small intestine (duodenum and jejunum), expression decreases downwardly in the subsequent quarter and is undetectable in the last quarter (the lowest ileum). Expressed at low level in other tissues, including liver.

The protein resides in the cell membrane. It is found in the apical cell membrane. It localises to the basolateral cell membrane. Its subcellular location is the endosome membrane. The protein localises to the cytoplasm. The catalysed reaction is folate(in) + H(+)(in) = folate(out) + H(+)(out). It carries out the reaction (6S)-5-methyl-5,6,7,8-tetrahydrofolate(in) + H(+)(in) = (6S)-5-methyl-5,6,7,8-tetrahydrofolate(out) + H(+)(out). The enzyme catalyses methotrexate(in) + H(+)(in) = methotrexate(out) + H(+)(out). It catalyses the reaction pemetrexed(in) + H(+)(in) = pemetrexed(out) + H(+)(out). In contrast to human ortholog, not inhibited by myricetin. In terms of biological role, proton-coupled folate symporter that mediates folate absorption using an H(+) gradient as a driving force. Involved in the intestinal absorption of folates at the brush-border membrane of the proximal jejunum, and the transport from blood to cerebrospinal fluid across the choroid plexus. Functions at acidic pH via alternate outward- and inward-open conformation states. Protonation of residues in the outward open state primes the protein for transport. Binding of folate promotes breaking of salt bridge network and subsequent closure of the extracellular gate, leading to the inward-open state and release of protons and folate. Also able to transport antifolate drugs, such as methotrexate and pemetrexed. Involved in FOLR1-mediated endocytosis by serving as a route of export of folates from acidified endosomes. Also acts as a lower-affinity, pH-independent heme carrier protein and constitutes the main importer of heme in the intestine. Imports heme in the retina and retinal pigment epithelium, in neurons of the hippocampus, in hepatocytes and in the renal epithelial cells. Hence, participates in the trafficking of heme and increases intracellular iron content. The polypeptide is Proton-coupled folate transporter (Rattus norvegicus (Rat)).